A 480-amino-acid chain; its full sequence is 2-phosphoxylose phosphatase 1 (480 aa).

Residues 1–6 (MLYRNR) are Cytoplasmic-facing. Residues 7–27 (FLVLLALAGLLAFLSLSLQFF) form a helical; Signal-anchor for type II membrane protein membrane-spanning segment. The Lumenal segment spans residues 28–480 (HLIPVSTTKN…YYDACHGEGA (453 aa)). The active-site Nucleophile is His97. Residues Asn194, Asn305, and Asn354 are each glycosylated (N-linked (GlcNAc...) asparagine). Asp379 (proton donor) is an active-site residue.

Belongs to the histidine acid phosphatase family. Interacts with B3GAT3; the interaction increases the 2-phosphoxylose phosphatase activity of PXYLP1 during completion of linkage region formation in a B3GAT3-mediated manner.

Its subcellular location is the golgi apparatus membrane. The enzyme catalyses 3-O-[beta-D-GlcA-(1-&gt;3)-beta-D-Gal-(1-&gt;3)-beta-D-Gal-(1-&gt;4)-beta-D-2-O-P-Xyl]-L-seryl-[protein] + H2O = 3-O-(beta-D-GlcA-(1-&gt;3)-beta-D-Gal-(1-&gt;3)-beta-D-Gal-(1-&gt;4)-beta-D-Xyl)-L-seryl-[protein] + phosphate. Responsible for the 2-O-dephosphorylation of xylose in the glycosaminoglycan-protein linkage region of proteoglycans thereby regulating the amount of mature glycosaminoglycan (GAG) chains. Sulfated glycosaminoglycans (GAGs), including heparan sulfate and chondroitin sulfate, are synthesized on the so-called common GAG-protein linkage region (GlcUAbeta1-3Galbeta1-3Galbeta1-4Xylbeta1-O-Ser) of core proteins, which is formed by the stepwise addition of monosaccharide residues by the respective specific glycosyltransferases. Xylose 2-O-dephosphorylation during completion of linkage region formation is a prerequisite for the initiation and efficient elongation of the repeating disaccharide region of GAG chains. The sequence is that of 2-phosphoxylose phosphatase 1 from Rattus norvegicus (Rat).